We begin with the raw amino-acid sequence, 127 residues long: Cliotide T3 (127 aa).

The signal sequence occupies residues 1–24 (MAYVRLTSLAVLFFLAASVMKTEG). Residues 25 to 53 (GLPTCGETCTLGTCYVPDCSCSWPICMKN) constitute a cross-link (cyclopeptide (Gly-Asn)). Intrachain disulfides connect Cys-29/Cys-43, Cys-33/Cys-45, and Cys-38/Cys-50. Residues 54–127 (HIIAANAKTV…DLKMPLESTN (74 aa)) constitute a propeptide, removed in mature form.

Contains 3 disulfide bonds. Post-translationally, this is a cyclic peptide. In terms of tissue distribution, expressed in flower, stem, shoot, leaf and seed but not in root, pod and nodule (at protein level).

In terms of biological role, probably participates in a plant defense mechanism. Not active against Gram-negative bacteria E.coli ATCC 700926, K.pneumoniae ATTC 13883 and P.aeruginosa ATCC 39018 at concentration up to 100 uM. Has cytotoxic and hemolytic activity. The sequence is that of Cliotide T3 from Clitoria ternatea (Butterfly pea).